Reading from the N-terminus, the 538-residue chain is MFS-type transporter tndD (538 aa).

A disordered region spans residues 1–42 (MSLSGSDSHLAVSPTLAEDMNSSDTSAGLAETPPADEEKRSI). N21 and N71 each carry an N-linked (GlcNAc...) asparagine glycan. A run of 11 helical transmembrane segments spans residues 81 to 101 (VGIV…FAPG), 115 to 135 (LLAG…PLIL), 153 to 173 (ICFT…MLIA), 203 to 223 (GGVI…GPVA), 235 to 255 (WVFW…FLFL), 309 to 329 (PIVA…YLMF), 348 to 368 (GLTF…IGAV), 394 to 414 (LPPL…YGWS), 422 to 442 (IVPI…FMCI), 444 to 464 (SYLV…NTVV), and 485 to 505 (LGWG…IPWA).

The protein belongs to the major facilitator superfamily.

It localises to the membrane. In terms of biological role, MFS-type transporter; part of the gene cluster that mediates the biosynthesis of talaronoid C, a fusicoccane diterpenoid with an unprecedented tricyclic 5/8/6 ring system. This Aspergillus flavipes protein is MFS-type transporter tndD.